The primary structure comprises 895 residues: Probable inorganic carbon transporter subunit DabA 1 (895 aa).

Zn(2+) contacts are provided by cysteine 398, aspartate 400, histidine 581, and cysteine 596.

This sequence belongs to the inorganic carbon transporter (TC 9.A.2) DabA family. As to quaternary structure, forms a complex with DabB. The cofactor is Zn(2+).

The protein localises to the cell inner membrane. Its function is as follows. Part of an energy-coupled inorganic carbon pump. The polypeptide is Probable inorganic carbon transporter subunit DabA 1 (Rhodopirellula baltica (strain DSM 10527 / NCIMB 13988 / SH1)).